The sequence spans 153 residues: Ribonuclease H (153 aa).

One can recognise an RNase H type-1 domain in the interval 1–141 (MKLVEIFTDG…CDELAKAGAN (141 aa)). The Mg(2+) site is built by Asp-9, Glu-47, Asp-69, and Asp-133.

It belongs to the RNase H family. Monomer. Mg(2+) is required as a cofactor.

The protein resides in the cytoplasm. It carries out the reaction Endonucleolytic cleavage to 5'-phosphomonoester.. Functionally, endonuclease that specifically degrades the RNA of RNA-DNA hybrids. The sequence is that of Ribonuclease H from Actinobacillus pleuropneumoniae serotype 5b (strain L20).